Reading from the N-terminus, the 224-residue chain is Endonuclease NucS (224 aa).

The protein belongs to the NucS endonuclease family.

It localises to the cytoplasm. Functionally, cleaves both 3' and 5' ssDNA extremities of branched DNA structures. This Mycolicibacterium smegmatis (strain ATCC 700084 / mc(2)155) (Mycobacterium smegmatis) protein is Endonuclease NucS.